A 397-amino-acid polypeptide reads, in one-letter code: Endoglucanase (397 aa).

The Proton donor role is filled by glutamate 194. The active-site Nucleophile is the glutamate 317.

The protein belongs to the glycosyl hydrolase 5 (cellulase A) family.

The catalysed reaction is Endohydrolysis of (1-&gt;4)-beta-D-glucosidic linkages in cellulose, lichenin and cereal beta-D-glucans.. The protein is Endoglucanase of Paenibacillus polymyxa (Bacillus polymyxa).